A 573-amino-acid polypeptide reads, in one-letter code: Probable D-xylulose kinase A (573 aa).

Residues histidine 97, arginine 168, aspartate 284, and asparagine 285 each coordinate substrate. ATP contacts are provided by residues tryptophan 366, glycine 471 to glycine 472, and asparagine 475.

Belongs to the FGGY kinase family.

The protein resides in the cytoplasm. It carries out the reaction D-xylulose + ATP = D-xylulose 5-phosphate + ADP + H(+). Highly specific D-xylulose kinase which participates in the catabolism of xylose. Xylose is a major component of hemicelluloses such as xylan. Most fungi utilize D-xylose via three enzymatic reactions, xylose reductase (XR), xylitol dehydrogenase (XDH), and xylulokinase, to form xylulose 5-phosphate, which enters pentose phosphate pathway. The sequence is that of Probable D-xylulose kinase A (xkiA) from Aspergillus clavatus (strain ATCC 1007 / CBS 513.65 / DSM 816 / NCTC 3887 / NRRL 1 / QM 1276 / 107).